A 298-amino-acid polypeptide reads, in one-letter code: Lactose transport system permease protein LacF (298 aa).

The next 6 membrane-spanning stretches (helical) occupy residues 17 to 37, 77 to 97, 112 to 132, 151 to 171, 208 to 228, and 269 to 289; these read GWLF…YPIL, VIFF…LAAM, MIFL…KSMF, PIGW…AITW, AFLT…TSTI, and FSYA…LSFL. One can recognise an ABC transmembrane type-1 domain in the interval 73 to 290; it reads LQNTVIFFVV…LMVAVLSFLQ (218 aa).

The protein belongs to the binding-protein-dependent transport system permease family. MalFG subfamily.

The protein localises to the cell inner membrane. Its function is as follows. Part of the binding-protein-dependent transport system for lactose. Probably responsible for the translocation of the substrate across the membrane. In Rhizobium radiobacter (Agrobacterium tumefaciens), this protein is Lactose transport system permease protein LacF (lacF).